A 350-amino-acid chain; its full sequence is Deoxyhypusine synthase-like protein (350 aa).

Belongs to the deoxyhypusine synthase family.

This chain is Deoxyhypusine synthase-like protein, found in Chlorobaculum parvum (strain DSM 263 / NCIMB 8327) (Chlorobium vibrioforme subsp. thiosulfatophilum).